A 116-amino-acid polypeptide reads, in one-letter code: Iron-sulfur cluster insertion protein ErpA (116 aa).

3 residues coordinate iron-sulfur cluster: Cys-44, Cys-108, and Cys-110.

Belongs to the HesB/IscA family. Homodimer. It depends on iron-sulfur cluster as a cofactor.

Its function is as follows. Required for insertion of 4Fe-4S clusters for at least IspG. The sequence is that of Iron-sulfur cluster insertion protein ErpA from Shewanella sp. (strain ANA-3).